The following is a 474-amino-acid chain: N-lysine methyltransferase SETD6 (474 aa).

Phosphoserine is present on Ser14. The SET domain occupies 63–287 (PKVLVSRQGT…KGHEIFNTYG (225 aa)). Residue Lys64 is modified to N6-methylated lysine; by autocatalysis. S-adenosyl-L-methionine is bound at residue 74 to 76 (AGY). Trp123 contributes to the substrate binding site. At Lys180 the chain carries N6-methylated lysine; by autocatalysis. Residue Tyr224 coordinates S-adenosyl-L-methionine. Ser225 and Gln227 together coordinate substrate. S-adenosyl-L-methionine contacts are provided by residues 252–253 (NH) and Tyr298. N6-methylated lysine; by autocatalysis is present on Lys373.

Belongs to the class V-like SAM-binding methyltransferase superfamily. Histone-lysine methyltransferase family. SETD6 subfamily. In terms of assembly, monomer, homodimer and homotrimer; these structures are stabilized in the presence of S-adenosyl-L-methionine (SAM). Post-translationally, automethylated.

The protein localises to the nucleus. The enzyme catalyses L-lysyl-[protein] + S-adenosyl-L-methionine = N(6)-methyl-L-lysyl-[protein] + S-adenosyl-L-homocysteine + H(+). It catalyses the reaction L-lysyl(8)-[histone H2AZ] + S-adenosyl-L-methionine = N(6)-methyl-L-lysyl(8)-[histone H2AZ] + S-adenosyl-L-homocysteine + H(+). In terms of biological role, protein-lysine N-methyltransferase. Monomethylates 'Lys-310' of the RELA subunit of NF-kappa-B complex, leading to down-regulation of NF-kappa-B transcription factor activity. Monomethylates 'Lys-8' of H2AZ (H2AZK8me1). Required for the maintenance of embryonic stem cell self-renewal. Methylates PAK4. This Rattus norvegicus (Rat) protein is N-lysine methyltransferase SETD6 (Setd6).